The following is a 284-amino-acid chain: MSDKRQSSHVQSQRIPESFRENSKTELGACGWILVAASFFFVIITFPISIWICIKIVKEYERVIIFRLGRILQGGAKGPGLFFILPCTDSLIKVDMRTISFDIPPQEVLTKDSVTISVDGVVYYRVQNATLAVANITNADSATRLLAQTTLRNALGTKNLSQILSDREEIAHHMQSTLDDATDDWGIKVERVEIKDVKLPVQLQRAMAAEAEAAREARAKVIAAEGEMNASRALKEASMVITESPAALQLRYLQTLTTIAAEKNSTIVFPLPVDMLQGIMGSNH.

Residues 1–31 (MSDKRQSSHVQSQRIPESFRENSKTELGACG) are Cytoplasmic-facing. Position 18 is a phosphoserine (Ser-18). Cys-30 is lipidated: S-palmitoyl cysteine. An intramembrane segment occupies 32-52 (WILVAASFFFVIITFPISIWI). Topologically, residues 53–284 (CIKIVKEYER…MLQGIMGSNH (232 aa)) are cytoplasmic. The S-palmitoyl cysteine moiety is linked to residue Cys-87. Phosphoserine is present on residues Ser-161 and Ser-244. The segment at 265 to 273 (STIVFPLPV) is required for homooligomerization. The required for lipid raft association stretch occupies residues 267–269 (IVF). An interaction with LANCL1 region spans residues 273 to 284 (VDMLQGIMGSNH).

This sequence belongs to the band 7/mec-2 family. In terms of assembly, interacts with LANCL1. Interacts with SLC2A1. Interacts with SLC4A1; this interaction positively regulates SLC4A1 activity. Identified in large complexes with SLC40A1, SLC14A1, SLC29A1 and AQP1. Homodimer and higher order homooligomers. The homodimer is banana-shaped. Interacts with ASIC1, ASIC2 and ASIC3. Interacts with STOML1; may redistribute STOM from the plasma membrane to late endosomes. Expressed in all sensory neurons of the dorsal root ganglia. In the CNS, expressed in many neurons of the spinal cord, medulla and pons. Expressed only in scattered neurons in the cortex, hippocampus, thalamus and basal ganglia. In the cerebellum, expressed in all Purkinje cells (at protein level). Widely expressed with high levels in heart, liver, skeletal muscle and testis and low levels in lung, brain and spleen.

It localises to the cell membrane. Its subcellular location is the cytoplasm. It is found in the cytoskeleton. The protein resides in the membrane raft. The protein localises to the melanosome. It localises to the cytoplasmic vesicle. Its function is as follows. Regulates ion channel activity and transmembrane ion transport. Regulates ASIC2 and ASIC3 channel activity. The chain is Stomatin from Mus musculus (Mouse).